The following is a 150-amino-acid chain: Ribosome maturation factor RimP (150 aa).

The protein belongs to the RimP family.

Its subcellular location is the cytoplasm. In terms of biological role, required for maturation of 30S ribosomal subunits. The polypeptide is Ribosome maturation factor RimP (Thermotoga sp. (strain RQ2)).